The chain runs to 72 residues: Cell division protein ZapB (72 aa).

A coiled-coil region spans residues 1 to 71 (MSLEILDQLE…LRSLLGRIDN (71 aa)). The interval 36–56 (LSRQTNEQLRSENEHLKTEHH) is disordered. A compositionally biased stretch (basic and acidic residues) spans 44-56 (LRSENEHLKTEHH).

Belongs to the ZapB family. As to quaternary structure, homodimer. The ends of the coiled-coil dimer bind to each other, forming polymers. Interacts with FtsZ.

It is found in the cytoplasm. Functionally, non-essential, abundant cell division factor that is required for proper Z-ring formation. It is recruited early to the divisome by direct interaction with FtsZ, stimulating Z-ring assembly and thereby promoting cell division earlier in the cell cycle. Its recruitment to the Z-ring requires functional FtsA or ZipA. In Histophilus somni (strain 129Pt) (Haemophilus somnus), this protein is Cell division protein ZapB.